Reading from the N-terminus, the 187-residue chain is Ribose 1,5-bisphosphate phosphokinase PhnN (187 aa).

Position 10 to 17 (10 to 17 (GPSGSGKD)) interacts with ATP.

The protein belongs to the ribose 1,5-bisphosphokinase family.

The catalysed reaction is alpha-D-ribose 1,5-bisphosphate + ATP = 5-phospho-alpha-D-ribose 1-diphosphate + ADP. Its pathway is metabolic intermediate biosynthesis; 5-phospho-alpha-D-ribose 1-diphosphate biosynthesis; 5-phospho-alpha-D-ribose 1-diphosphate from D-ribose 5-phosphate (route II): step 3/3. Catalyzes the phosphorylation of ribose 1,5-bisphosphate to 5-phospho-D-ribosyl alpha-1-diphosphate (PRPP). The protein is Ribose 1,5-bisphosphate phosphokinase PhnN of Klebsiella pneumoniae subsp. pneumoniae (strain ATCC 700721 / MGH 78578).